Here is a 46-residue protein sequence, read N- to C-terminus: GLFSKFNKKKIKSGLFKIIKTAGKEAGLEALRTGIDVIGCKIKGEC.

C40 and C46 form a disulfide bridge.

Expressed by the skin glands.

Its subcellular location is the secreted. In terms of biological role, mast cell degranulating peptide. Causes histamine release from rat peritoneal mast cells in vitro. Has antibacterial activity against the Gram-negative bacterium E.coli K12 and Gram-positive bacterium M.luteus NCT C2665. The sequence is that of Esculentin-1SEb from Lithobates sevosus (Dusky gopher frog).